The chain runs to 343 residues: Ketol-acid reductoisomerase (NADP(+)) (343 aa).

In terms of domain architecture, KARI N-terminal Rossmann spans 7–186 (TTVYYDEDAD…GCTRAGVIET (180 aa)). Residues 30–33 (YGSQ), Arg53, Ser56, Ser58, and 88–91 (DTIQ) contribute to the NADP(+) site. Residue His112 is part of the active site. Gly138 is an NADP(+) binding site. One can recognise a KARI C-terminal knotted domain in the interval 187-329 (SFQEEVETDL…ENLRELFAWG (143 aa)). Positions 195, 199, 231, and 235 each coordinate Mg(2+). Ser256 contributes to the substrate binding site.

Belongs to the ketol-acid reductoisomerase family. Requires Mg(2+) as cofactor.

The enzyme catalyses (2R)-2,3-dihydroxy-3-methylbutanoate + NADP(+) = (2S)-2-acetolactate + NADPH + H(+). The catalysed reaction is (2R,3R)-2,3-dihydroxy-3-methylpentanoate + NADP(+) = (S)-2-ethyl-2-hydroxy-3-oxobutanoate + NADPH + H(+). The protein operates within amino-acid biosynthesis; L-isoleucine biosynthesis; L-isoleucine from 2-oxobutanoate: step 2/4. Its pathway is amino-acid biosynthesis; L-valine biosynthesis; L-valine from pyruvate: step 2/4. Involved in the biosynthesis of branched-chain amino acids (BCAA). Catalyzes an alkyl-migration followed by a ketol-acid reduction of (S)-2-acetolactate (S2AL) to yield (R)-2,3-dihydroxy-isovalerate. In the isomerase reaction, S2AL is rearranged via a Mg-dependent methyl migration to produce 3-hydroxy-3-methyl-2-ketobutyrate (HMKB). In the reductase reaction, this 2-ketoacid undergoes a metal-dependent reduction by NADPH to yield (R)-2,3-dihydroxy-isovalerate. This chain is Ketol-acid reductoisomerase (NADP(+)), found in Haloarcula marismortui (strain ATCC 43049 / DSM 3752 / JCM 8966 / VKM B-1809) (Halobacterium marismortui).